Consider the following 239-residue polypeptide: Transcriptional regulatory protein DcuR (239 aa).

One can recognise a Response regulatory domain in the interval 3-121 (NVLIIDDDAM…RFEEALTGWR (119 aa)). D56 is subject to 4-aspartylphosphate. A DNA-binding region (H-T-H motif) is located at residues 181–200 (TDELANEVNISRVSCRKYLI).

In terms of processing, phosphorylated and activated by DcuS.

The protein localises to the cytoplasm. Functionally, member of the two-component regulatory system DcuR/DcuS. Involved in the C4-dicarboxylate-stimulated regulation of the genes encoding the anaerobic fumarate respiratory system (frdABCD; nuoAN; dcuB; dcuC; sdhCDAB; etc.). Weakly regulates the aerobic C4-dicarboxylate transporter dctA. The protein is Transcriptional regulatory protein DcuR (dcuR) of Escherichia coli O157:H7.